A 480-amino-acid polypeptide reads, in one-letter code: UDP-N-acetylmuramoylalanine--D-glutamate ligase (480 aa).

An ATP-binding site is contributed by 127 to 133; the sequence is GTNGKTT.

It belongs to the MurCDEF family.

It is found in the cytoplasm. The enzyme catalyses UDP-N-acetyl-alpha-D-muramoyl-L-alanine + D-glutamate + ATP = UDP-N-acetyl-alpha-D-muramoyl-L-alanyl-D-glutamate + ADP + phosphate + H(+). The protein operates within cell wall biogenesis; peptidoglycan biosynthesis. Functionally, cell wall formation. Catalyzes the addition of glutamate to the nucleotide precursor UDP-N-acetylmuramoyl-L-alanine (UMA). This is UDP-N-acetylmuramoylalanine--D-glutamate ligase from Tropheryma whipplei (strain TW08/27) (Whipple's bacillus).